The sequence spans 181 residues: ATP-dependent protease subunit HslV (181 aa).

Residue T7 is part of the active site. The Na(+) site is built by G166, C169, and T172.

The protein belongs to the peptidase T1B family. HslV subfamily. As to quaternary structure, a double ring-shaped homohexamer of HslV is capped on each side by a ring-shaped HslU homohexamer. The assembly of the HslU/HslV complex is dependent on binding of ATP.

It localises to the cytoplasm. The catalysed reaction is ATP-dependent cleavage of peptide bonds with broad specificity.. Its activity is regulated as follows. Allosterically activated by HslU binding. Functionally, protease subunit of a proteasome-like degradation complex believed to be a general protein degrading machinery. The polypeptide is ATP-dependent protease subunit HslV (Variovorax paradoxus (strain S110)).